Consider the following 189-residue polypeptide: Density-regulated protein homolog (189 aa).

Residues 105 to 172 (ICVSRAARGK…DLFDVIPEKW (68 aa)) form the SUI1 domain.

It belongs to the DENR family. In terms of assembly, interacts with MCTS1.

Functionally, regulates translation as part of a complex with MCTS1. Specifically required for translational re-initiation in mRNAs containing upstream open reading frames (uORFs). Not required for standard translational initiation. Regulates expression of a subset of gene products including mbc, InR and EcR. In Drosophila melanogaster (Fruit fly), this protein is Density-regulated protein homolog.